A 549-amino-acid chain; its full sequence is Cation/acetate symporter ActP (549 aa).

Residues 1–32 (MKRVLTALAATLPFAANAADAISGAVERQPTN) are Periplasmic-facing. Residues 33-55 (WQAIIMFLIFVVFTLGITYWASK) traverse the membrane as a helical segment. At 56–75 (RVRSRNDYYTAGGNITGFQN) the chain is on the cytoplasmic side. The helical transmembrane segment at 76-98 (GLAIAGDYMSAASFLGISALVFT) threads the bilayer. Residues 99 to 102 (SGYD) lie on the Periplasmic side of the membrane. The helical transmembrane segment at 103 to 125 (GLIYSLGFLVGWPIILFLIAERL) threads the bilayer. The Cytoplasmic segment spans residues 126–145 (RNLGRYTFADVASYRLKQGP). The chain crosses the membrane as a helical span at residues 146–168 (IRILSACGSLVVVALYLIAQMVG). Residues 169 to 182 (AGKLIELLFGLNYH) are Periplasmic-facing. Residues 183–205 (IAVVLVGVLMMMYVLFGGMLATT) form a helical membrane-spanning segment. Residues 206-211 (WVQIIK) lie on the Cytoplasmic side of the membrane. Residues 212–234 (AVLLLFGASFMAFMVMKHVGFSF) form a helical membrane-spanning segment. The Periplasmic portion of the chain corresponds to 235–263 (NNLFSEAMAVHPKGVDIMKPGGLVKDPIS). Residues 264 to 286 (ALSLGLGLMFGTAGLPHILMHFF) traverse the membrane as a helical segment. The Cytoplasmic portion of the chain corresponds to 287 to 297 (TVSDAREARKS). Residues 298–320 (VFYATGFMGYFYILTFIIGFGAI) traverse the membrane as a helical segment. Residues 321–358 (MLVGANPEYKDAAGHLIGGNNMAAVHLANAVGGNLFLG) lie on the Periplasmic side of the membrane. Residues 359 to 381 (FISAVAFATILAVVAGLTLAGAS) form a helical membrane-spanning segment. The Cytoplasmic portion of the chain corresponds to 382-401 (AVSHDLYANVFKKGATEREE). A helical membrane pass occupies residues 402–424 (LRVSKITVLILGVIAIILGVLFE). The Periplasmic segment spans residues 425-427 (NQN). Residues 428–450 (IAFMVGLAFAIAASCNFPIILLS) form a helical membrane-spanning segment. The Cytoplasmic portion of the chain corresponds to 451–461 (MYWSKLTTRGA). The chain crosses the membrane as a helical span at residues 462–484 (MLGGWLGLITAVVLMILGPTIWV). The Periplasmic segment spans residues 485–493 (QILGHEKAI). A helical membrane pass occupies residues 494-516 (FPYEYPALFSISVAFLGIWLFSA). The Cytoplasmic segment spans residues 517 to 549 (TDNSAEGARERELFRAQFIRSQTGFGVEQGRAH).

The protein belongs to the sodium:solute symporter (SSF) (TC 2.A.21) family.

It localises to the cell inner membrane. In terms of biological role, transports acetate. This is Cation/acetate symporter ActP (actP) from Escherichia coli O6:H1 (strain CFT073 / ATCC 700928 / UPEC).